Reading from the N-terminus, the 170-residue chain is Lipoprotein signal peptidase (170 aa).

3 consecutive transmembrane segments (helical) span residues 5–25, 62–82, and 89–111; these read IVGV…KAYA, SNLI…VLFV, and STIC…LRFG. Active-site residues include D115 and D133. Residues 126–146 traverse the membrane as a helical segment; the sequence is WPAFNFADVCVTCGVICFLCL.

The protein belongs to the peptidase A8 family.

The protein localises to the cell inner membrane. The enzyme catalyses Release of signal peptides from bacterial membrane prolipoproteins. Hydrolyzes -Xaa-Yaa-Zaa-|-(S,diacylglyceryl)Cys-, in which Xaa is hydrophobic (preferably Leu), and Yaa (Ala or Ser) and Zaa (Gly or Ala) have small, neutral side chains.. It participates in protein modification; lipoprotein biosynthesis (signal peptide cleavage). Its function is as follows. This protein specifically catalyzes the removal of signal peptides from prolipoproteins. This chain is Lipoprotein signal peptidase, found in Anaplasma marginale (strain Florida).